The chain runs to 282 residues: Cholesterol 25-hydroxylase-like protein 1, member 1 (282 aa).

The N-linked (GlcNAc...) asparagine glycan is linked to Asn-3. Helical transmembrane passes span 40–60, 85–107, and 127–147; these read FFPV…FAVL, MLRT…VLIT, and FSGG…WHMV. The 133-residue stretch at 133–265 folds into the Fatty acid hydroxylase domain; sequence ALLVFDTQYF…FSHWDKIFGT (133 aa). Positions 144-148 match the Histidine box-1 motif; it reads WHMVH. The Histidine box-2 motif lies at 159–163; sequence HAIHH. Positions 240–246 match the Histidine box-3 motif; that stretch reads AHDMHHQ.

The protein belongs to the sterol desaturase family. Fe cation is required as a cofactor.

It is found in the endoplasmic reticulum membrane. In terms of biological role, may catalyze the formation of 25-hydroxycholesterol from cholesterol. The polypeptide is Cholesterol 25-hydroxylase-like protein 1, member 1 (ch25hl1.1) (Danio rerio (Zebrafish)).